The primary structure comprises 425 residues: Serine--tRNA ligase (425 aa).

231–233 (TAE) provides a ligand contact to L-serine. 262-264 (RSE) is an ATP binding site. Glu-285 contacts L-serine. 349–352 (EISS) provides a ligand contact to ATP. An L-serine-binding site is contributed by Ser-385.

The protein belongs to the class-II aminoacyl-tRNA synthetase family. Type-1 seryl-tRNA synthetase subfamily. Homodimer. The tRNA molecule binds across the dimer.

The protein resides in the cytoplasm. The enzyme catalyses tRNA(Ser) + L-serine + ATP = L-seryl-tRNA(Ser) + AMP + diphosphate + H(+). It carries out the reaction tRNA(Sec) + L-serine + ATP = L-seryl-tRNA(Sec) + AMP + diphosphate + H(+). The protein operates within aminoacyl-tRNA biosynthesis; selenocysteinyl-tRNA(Sec) biosynthesis; L-seryl-tRNA(Sec) from L-serine and tRNA(Sec): step 1/1. Its function is as follows. Catalyzes the attachment of serine to tRNA(Ser). Is also able to aminoacylate tRNA(Sec) with serine, to form the misacylated tRNA L-seryl-tRNA(Sec), which will be further converted into selenocysteinyl-tRNA(Sec). The protein is Serine--tRNA ligase of Bacillus velezensis (strain DSM 23117 / BGSC 10A6 / LMG 26770 / FZB42) (Bacillus amyloliquefaciens subsp. plantarum).